The sequence spans 479 residues: Aspartyl/glutamyl-tRNA(Asn/Gln) amidotransferase subunit B (479 aa).

Belongs to the GatB/GatE family. GatB subfamily. As to quaternary structure, heterotrimer of A, B and C subunits.

It catalyses the reaction L-glutamyl-tRNA(Gln) + L-glutamine + ATP + H2O = L-glutaminyl-tRNA(Gln) + L-glutamate + ADP + phosphate + H(+). It carries out the reaction L-aspartyl-tRNA(Asn) + L-glutamine + ATP + H2O = L-asparaginyl-tRNA(Asn) + L-glutamate + ADP + phosphate + 2 H(+). In terms of biological role, allows the formation of correctly charged Asn-tRNA(Asn) or Gln-tRNA(Gln) through the transamidation of misacylated Asp-tRNA(Asn) or Glu-tRNA(Gln) in organisms which lack either or both of asparaginyl-tRNA or glutaminyl-tRNA synthetases. The reaction takes place in the presence of glutamine and ATP through an activated phospho-Asp-tRNA(Asn) or phospho-Glu-tRNA(Gln). This chain is Aspartyl/glutamyl-tRNA(Asn/Gln) amidotransferase subunit B, found in Streptococcus equi subsp. zooepidemicus (strain MGCS10565).